The primary structure comprises 261 residues: Carnitinyl-CoA dehydratase (261 aa).

The active-site Nucleophile is the glutamate 111. The active-site Proton acceptor is the glutamate 131.

The protein belongs to the enoyl-CoA hydratase/isomerase family.

The enzyme catalyses (R)-carnitinyl-CoA = crotonobetainyl-CoA + H2O. It participates in amine and polyamine metabolism; carnitine metabolism. In terms of biological role, catalyzes the reversible dehydration of L-carnitinyl-CoA to crotonobetainyl-CoA. This Salmonella typhimurium (strain LT2 / SGSC1412 / ATCC 700720) protein is Carnitinyl-CoA dehydratase.